The following is a 198-amino-acid chain: Probable GTP-binding protein EngB (198 aa).

Residues 21-195 (NFSEVAFLGR…EDIIINQTLG (175 aa)) enclose the EngB-type G domain. GTP-binding positions include 29 to 36 (GRSNVGKS), 56 to 60 (GKTQL), 81 to 84 (DLPG), 151 to 154 (TKCD), and 174 to 176 (VSN). 2 residues coordinate Mg(2+): S36 and T58.

Belongs to the TRAFAC class TrmE-Era-EngA-EngB-Septin-like GTPase superfamily. EngB GTPase family. Requires Mg(2+) as cofactor.

Functionally, necessary for normal cell division and for the maintenance of normal septation. The protein is Probable GTP-binding protein EngB of Campylobacter jejuni subsp. jejuni serotype O:2 (strain ATCC 700819 / NCTC 11168).